A 364-amino-acid polypeptide reads, in one-letter code: Acetylserotonin O-methyltransferase 1 (364 aa).

S-adenosyl-L-homocysteine contacts are provided by glycine 208, aspartate 231, aspartate 251, and lysine 265. The Proton acceptor role is filled by histidine 269. Residues glutamate 300 and glutamate 330 contribute to the active site.

The protein belongs to the class I-like SAM-binding methyltransferase superfamily. Cation-independent O-methyltransferase family. As to quaternary structure, homodimer. As to expression, expressed in leaves, stems and flowers.

Its subcellular location is the cytoplasm. The catalysed reaction is N-acetylserotonin + S-adenosyl-L-methionine = melatonin + S-adenosyl-L-homocysteine + H(+). It functions in the pathway aromatic compound metabolism; melatonin biosynthesis; melatonin from serotonin: step 1/2. In terms of biological role, methyltransferase which catalyzes the transfer of a methyl group onto N-acetylserotonin, producing melatonin (N-acetyl-5-methoxytryptamine). The protein is Acetylserotonin O-methyltransferase 1 of Oryza sativa subsp. japonica (Rice).